A 450-amino-acid polypeptide reads, in one-letter code: Gastrin/cholecystokinin type B receptor (450 aa).

Residues 1–57 lie on the Extracellular side of the membrane; that stretch reads MELLKLNSSVQGPGPGSGSSLCHPGVSLLNSSSAGNLSCEPPRIRGTGTRELELAIR. N-linked (GlcNAc...) asparagine glycans are attached at residues Asn7, Asn30, and Asn36. A helical membrane pass occupies residues 58-79; it reads ITLYAVIFLMSIGGNMLIIVVL. The Cytoplasmic segment spans residues 80–87; it reads GLSRRLRT. Residues 88-109 form a helical membrane-spanning segment; the sequence is VTNAFLLSLAVSDLLLAVACMP. The Extracellular portion of the chain corresponds to 110–131; that stretch reads FTLLPNLMGTFIFGTVICKAVS. A disulfide bridge connects residues Cys127 and Cys205. Residues 132-150 form a helical membrane-spanning segment; the sequence is YLMGVSVSVSTLNLVAIAL. The Cytoplasmic segment spans residues 151 to 170; it reads ERYSAICRPLQARVWQTRSH. Residues 171–189 form a helical membrane-spanning segment; it reads AARVILATWLLSGLLMVPY. The Extracellular segment spans residues 190–219; sequence PVYTVVQPVGPRVLQCMHRWPSARVRQTWS. A helical membrane pass occupies residues 220–242; that stretch reads VLLLMLLFFIPGVVMAVAYGLIS. The Cytoplasmic segment spans residues 243–336; it reads RELYLGLRFD…KLLAKKRVVR (94 aa). The segment at 258-277 is disordered; sequence DTQSRVRNQGGLPGGTAPGP. Residues 337 to 358 form a helical membrane-spanning segment; it reads MLLVIVLLFFLCWLPIYSANTW. Residues 359–376 are Extracellular-facing; it reads CAFDGPGAHRALSGAPIS. Residues 377–397 form a helical membrane-spanning segment; it reads FIHLLSYASACVNPLVYCFMH. Over 398–450 the chain is Cytoplasmic; that stretch reads RRFRQACLDTCARCCPRPPRARPRPLPDEDPPTPSIASLSRLSYTTISTLGPG. A lipid anchor (S-palmitoyl cysteine) is attached at Cys411.

This sequence belongs to the G-protein coupled receptor 1 family. Stomach and brain.

It localises to the cell membrane. Functionally, receptor for gastrin and cholecystokinin. The CCK-B receptors occur throughout the central nervous system where they modulate anxiety, analgesia, arousal, and neuroleptic activity. This receptor mediates its action by association with G proteins that activate a phosphatidylinositol-calcium second messenger system. The polypeptide is Gastrin/cholecystokinin type B receptor (CCKBR) (Mastomys natalensis (African soft-furred rat)).